The following is a 377-amino-acid chain: Nucleosome assembly protein 1;3 (377 aa).

Positions 26-80 form a coiled coil; it reads VNVLKNKLQGLTGKHSNVLENLSPNVRKRVEVLREIQTQHDELEAKFFEERAALE. Residues 47–62 carry the Nuclear export signal motif; that stretch reads LSPNVRKRVEVLREIQ. The Nuclear localization signal motif lies at 223 to 228; that stretch reads KKKPKK. The disordered stretch occupies residues 298–377; that stretch reads EAAQDEDYID…GERPPECKQQ (80 aa). Acidic residues predominate over residues 300 to 341; the sequence is AQDEDYIDLEDDEDEEDDEDEDEDEEDEEEEDEDEDDDDEDE. Over residues 345 to 357 the composition is skewed to basic residues; it reads KTKKKSSAGRKRS. Cysteine 374 carries the cysteine methyl ester modification. Cysteine 374 is lipidated: S-farnesyl cysteine. Positions 375 to 377 are cleaved as a propeptide — removed in mature form; that stretch reads KQQ.

Belongs to the nucleosome assembly protein (NAP) family. Can form homomeric and heteromeric protein complexes with NAP1;4. Binds histones H2A and H2B in vivo. Also able to bind histones H1 and H4 in vitro. Interacts with CYCB1;1 and with alpha tubulin.

Its subcellular location is the nucleus. It is found in the cytoplasm. Its function is as follows. May modulate chromatin structure by regulation of nucleosome assembly/disassembly. Could function together with B-type cyclins in the regulation of microtubule dynamics. This chain is Nucleosome assembly protein 1;3 (NAP1;3), found in Nicotiana tabacum (Common tobacco).